A 237-amino-acid chain; its full sequence is Orotidine 5'-phosphate decarboxylase (237 aa).

Substrate contacts are provided by residues Asp10, Lys33, 60 to 69 (DLKLHDIPNT), Thr124, Arg186, Gln195, Gly215, and Arg216. The active-site Proton donor is the Lys62.

The protein belongs to the OMP decarboxylase family. Type 1 subfamily. Homodimer.

It catalyses the reaction orotidine 5'-phosphate + H(+) = UMP + CO2. It participates in pyrimidine metabolism; UMP biosynthesis via de novo pathway; UMP from orotate: step 2/2. Its function is as follows. Catalyzes the decarboxylation of orotidine 5'-monophosphate (OMP) to uridine 5'-monophosphate (UMP). This chain is Orotidine 5'-phosphate decarboxylase, found in Lactiplantibacillus plantarum (strain ATCC BAA-793 / NCIMB 8826 / WCFS1) (Lactobacillus plantarum).